Consider the following 213-residue polypeptide: Imidazole glycerol phosphate synthase subunit HisH (213 aa).

The region spanning 4-213 (SIAIVDYGMG…LYRNFVHWKP (210 aa)) is the Glutamine amidotransferase type-1 domain. Cysteine 83 functions as the Nucleophile in the catalytic mechanism. Catalysis depends on residues histidine 193 and glutamate 195.

In terms of assembly, heterodimer of HisH and HisF.

It localises to the cytoplasm. The enzyme catalyses 5-[(5-phospho-1-deoxy-D-ribulos-1-ylimino)methylamino]-1-(5-phospho-beta-D-ribosyl)imidazole-4-carboxamide + L-glutamine = D-erythro-1-(imidazol-4-yl)glycerol 3-phosphate + 5-amino-1-(5-phospho-beta-D-ribosyl)imidazole-4-carboxamide + L-glutamate + H(+). It carries out the reaction L-glutamine + H2O = L-glutamate + NH4(+). Its pathway is amino-acid biosynthesis; L-histidine biosynthesis; L-histidine from 5-phospho-alpha-D-ribose 1-diphosphate: step 5/9. Functionally, IGPS catalyzes the conversion of PRFAR and glutamine to IGP, AICAR and glutamate. The HisH subunit catalyzes the hydrolysis of glutamine to glutamate and ammonia as part of the synthesis of IGP and AICAR. The resulting ammonia molecule is channeled to the active site of HisF. The sequence is that of Imidazole glycerol phosphate synthase subunit HisH from Burkholderia multivorans (strain ATCC 17616 / 249).